We begin with the raw amino-acid sequence, 37 residues long: Large ribosomal subunit protein bL36c (37 aa).

The protein belongs to the bacterial ribosomal protein bL36 family.

It localises to the plastid. It is found in the chloroplast. The polypeptide is Large ribosomal subunit protein bL36c (Coffea arabica (Arabian coffee)).